Consider the following 338-residue polypeptide: 2-methyl-6-phytyl-1,4-hydroquinone methyltransferase, chloroplastic (338 aa).

A chloroplast-targeting transit peptide spans 1-51 (MASLMLNGAITFPKGLGSPGSNLHARSIPRPTLLSVTRTSTPRLSVATRCS). Over 52 to 307 (SSSVSSSRPS…VNNPFSFLGR (256 aa)) the chain is Chloroplast intermembrane. The tract at residues 114-123 (VVDVGGGTGF) is SAM motif I. Residues 159 to 172 (CKIVEGDAEDLPFP) form an SAM motif II region. The SAM motif III stretch occupies residues 200 to 213 (RVLKIGGKACLIGP). A helical membrane pass occupies residues 308 to 328 (FLLGTLAAAWFVLIPIYMWIK). The Stromal segment spans residues 329-338 (DQIVPKDQPI).

This sequence belongs to the class I-like SAM-binding methyltransferase superfamily. MPBQ/MBSQ MT family.

It localises to the plastid. It is found in the chloroplast inner membrane. It carries out the reaction 2-methyl-6-phytyl-1,4-benzene-1,4-diol + S-adenosyl-L-methionine = 2,3-dimethyl-6-phytylbenzene-1,4-diol + S-adenosyl-L-homocysteine + H(+). The catalysed reaction is 2-methyl-6-(all-trans-nonaprenyl)benzene-1,4-diol + S-adenosyl-L-methionine = plastoquinol-9 + S-adenosyl-L-homocysteine + H(+). The enzyme catalyses 6-geranylgeranyl-2-methylbenzene-1,4-diol + S-adenosyl-L-methionine = 6-geranylgeranyl-2,3-dimethylbenzene-1,4-diol + S-adenosyl-L-homocysteine + H(+). It participates in cofactor biosynthesis; tocopherol biosynthesis. Its function is as follows. Involved in a key methylation step in both tocopherols (vitamin E) and plastoquinone synthesis. Catalyzes the conversion of 2-methyl-6-phytyl-1,4-hydroquinone (MPBQ) to 2,3-dimethyl-6-phytyl-1,4-hydroquinone (DMPQ, a substrate for tocopherol cyclase), and 2-methyl-6-solanyl-1,4-benzoquinone (MSBQ) to plastoquinone. The chain is 2-methyl-6-phytyl-1,4-hydroquinone methyltransferase, chloroplastic (VTE3) from Arabidopsis thaliana (Mouse-ear cress).